Reading from the N-terminus, the 125-residue chain is Large ribosomal subunit protein uL22 (125 aa).

Belongs to the universal ribosomal protein uL22 family. Part of the 50S ribosomal subunit.

Its function is as follows. This protein binds specifically to 23S rRNA; its binding is stimulated by other ribosomal proteins, e.g. L4, L17, and L20. It is important during the early stages of 50S assembly. It makes multiple contacts with different domains of the 23S rRNA in the assembled 50S subunit and ribosome. In terms of biological role, the globular domain of the protein is located near the polypeptide exit tunnel on the outside of the subunit, while an extended beta-hairpin is found that lines the wall of the exit tunnel in the center of the 70S ribosome. The polypeptide is Large ribosomal subunit protein uL22 (Novosphingobium aromaticivorans (strain ATCC 700278 / DSM 12444 / CCUG 56034 / CIP 105152 / NBRC 16084 / F199)).